The primary structure comprises 434 residues: Probable exopolygalacturonase A (434 aa).

An N-terminal signal peptide occupies residues 1–19 (MKLPILVTLFITLPALCVS). N-linked (GlcNAc...) asparagine glycosylation is found at Asn-46, Asn-57, Asn-106, Asn-199, and Asn-207. The PbH1 1 repeat unit spans residues 232 to 253 (SSNIVIQDSRIVNTDDCVSFKP). The active-site Proton donor is Asp-246. Cysteines 248 and 265 form a disulfide. N-linked (GlcNAc...) asparagine glycosylation is present at Asn-254. One copy of the PbH1 2 repeat lies at 255–275 (STQIVIQNLDCTGSHGISVGS). His-269 is an active-site residue. Asn-293, Asn-329, and Asn-354 each carry an N-linked (GlcNAc...) asparagine glycan. Cys-392 and Cys-398 are joined by a disulfide. Asn-400 carries an N-linked (GlcNAc...) asparagine glycan.

The protein belongs to the glycosyl hydrolase 28 family.

It localises to the secreted. It catalyses the reaction [(1-&gt;4)-alpha-D-galacturonosyl](n) + H2O = alpha-D-galacturonate + [(1-&gt;4)-alpha-D-galacturonosyl](n-1). In terms of biological role, specific in hydrolyzing the terminal glycosidic bond of polygalacturonic acid and oligogalacturonates. This Aspergillus niger (strain ATCC MYA-4892 / CBS 513.88 / FGSC A1513) protein is Probable exopolygalacturonase A (pgxA).